The sequence spans 349 residues: 3-dehydroquinate synthase (349 aa).

Residues Asp63 to Lys68, Gly97 to Asp101, Thr121 to Thr122, Lys134, Lys143, and Phe161 to Thr164 each bind NAD(+). Zn(2+) contacts are provided by Glu176, His235, and His252.

This sequence belongs to the sugar phosphate cyclases superfamily. Dehydroquinate synthase family. Co(2+) serves as cofactor. The cofactor is Zn(2+). NAD(+) is required as a cofactor.

The protein localises to the cytoplasm. It catalyses the reaction 7-phospho-2-dehydro-3-deoxy-D-arabino-heptonate = 3-dehydroquinate + phosphate. It functions in the pathway metabolic intermediate biosynthesis; chorismate biosynthesis; chorismate from D-erythrose 4-phosphate and phosphoenolpyruvate: step 2/7. In terms of biological role, catalyzes the conversion of 3-deoxy-D-arabino-heptulosonate 7-phosphate (DAHP) to dehydroquinate (DHQ). This Sulfurimonas denitrificans (strain ATCC 33889 / DSM 1251) (Thiomicrospira denitrificans (strain ATCC 33889 / DSM 1251)) protein is 3-dehydroquinate synthase.